We begin with the raw amino-acid sequence, 96 residues long: Large ribosomal subunit protein uL23 (96 aa).

Belongs to the universal ribosomal protein uL23 family. As to quaternary structure, part of the 50S ribosomal subunit. Contacts protein L29, and trigger factor when it is bound to the ribosome.

Functionally, one of the early assembly proteins it binds 23S rRNA. One of the proteins that surrounds the polypeptide exit tunnel on the outside of the ribosome. Forms the main docking site for trigger factor binding to the ribosome. The chain is Large ribosomal subunit protein uL23 from Clostridium novyi (strain NT).